Reading from the N-terminus, the 76-residue chain is Kappa-scoloptoxin(15)-Ssd3a (76 aa).

A signal peptide spans 1 to 23 (MEGKIIFICFLVVLLTLPELISS).

Contains 2 disulfide bonds. Expressed by the venom gland.

The protein resides in the secreted. Acts as a voltage-gated potassium channel inhibitor. The sequence is that of Kappa-scoloptoxin(15)-Ssd3a from Scolopendra dehaani (Thai centipede).